A 105-amino-acid chain; its full sequence is Dicamba O-demethylase, ferredoxin component (105 aa).

The 2Fe-2S ferredoxin-type domain occupies 2–105 (PQITVVNQSG…GIKVTIAQED (104 aa)). [2Fe-2S] cluster-binding residues include cysteine 40, cysteine 46, cysteine 49, and cysteine 86.

This sequence belongs to the adrenodoxin/putidaredoxin family. In terms of assembly, monomer. The dicamba O-demethylase multicomponent enzyme system is composed of an oxygenase component (DdmC) and an electron transfer component formed by a ferredoxin reductase (DdmA1) and a ferredoxin (DdmB). In vitro, dicamba O-demethylase assays in which DdmA2 is substituted for DdmA1 demonstrate that the two enzymes possess nearly identical activities. [2Fe-2S] cluster serves as cofactor.

Its function is as follows. Component of the dicamba O-demethylase multicomponent enzyme system involved in the degradation of the herbicide dicamba. In vitro, functions as an intermediate electron transfer protein. The sequence is that of Dicamba O-demethylase, ferredoxin component from Stenotrophomonas maltophilia (Pseudomonas maltophilia).